The sequence spans 351 residues: Sesquiterpene synthase 14 (351 aa).

Mg(2+) contacts are provided by D87, N223, S227, and E231. The DDXXD motif motif lies at D87–D91. Positions N223–E231 match the NSE/DTE motif motif. Residues R312 and Y313 each contribute to the (2E,6E)-farnesyl diphosphate site.

It belongs to the terpene synthase family. Mg(2+) serves as cofactor.

It catalyses the reaction (2E,6E)-farnesyl diphosphate = pentalenene + diphosphate. In terms of biological role, terpene cyclase that catalyzes the cyclization of farnesyl diphosphate (FPP) to pentalenene as a major product, as well as caryophyllene. In Postia placenta (strain ATCC 44394 / Madison 698-R) (Brown rot fungus), this protein is Sesquiterpene synthase 14.